Here is a 1013-residue protein sequence, read N- to C-terminus: Poly [ADP-ribose] polymerase 1 (1013 aa).

Alanine 2 bears the N-acetylalanine mark. Residues 9–93 form a PARP-type 1 zinc finger; it reads YRVEYAKSGR…KVKKTAEAGG (85 aa). Cysteine 21 and cysteine 24 together coordinate Zn(2+). Position 41 is a phosphoserine (serine 41). Zn(2+) is bound by residues histidine 53 and cysteine 56. An N6-acetyllysine mark is found at lysine 97 and lysine 105. The segment at 113–203 adopts a PARP-type 2 zinc-finger fold; that stretch reads FAAEYAKSNR…VLKKQLPGVK (91 aa). Residues cysteine 125 and cysteine 128 each contribute to the Zn(2+) site. At lysine 131 the chain carries N6-acetyllysine. Residues histidine 159 and cysteine 162 each contribute to the Zn(2+) site. 3 positions are modified to phosphoserine: serine 177, serine 179, and serine 185. A Glycyl lysine isopeptide (Lys-Gly) (interchain with G-Cter in SUMO2) cross-link involves residue lysine 192. The interval 198–233 is disordered; it reads QLPGVKSEGKRKGDEVDGADEVAKKKSKKGKDKDSK. Lysine 203 participates in a covalent cross-link: Glycyl lysine isopeptide (Lys-Gly) (interchain with G-Cter in SUMO1); alternate. A Glycyl lysine isopeptide (Lys-Gly) (interchain with G-Cter in SUMO2); alternate cross-link involves residue lysine 203. 2 short sequence motifs (nuclear localization signal) span residues 207 to 209 and 221 to 226; these read KRK and KKKSKK. The PADR1 zinc-binding domain occupies 225-359; the sequence is KKGKDKDSKL…VKKQDRIFPP (135 aa). A Glycyl lysine isopeptide (Lys-Gly) (interchain with G-Cter in SUMO2) cross-link involves residue lysine 249. 2 positions are modified to phosphoserine: serine 274 and serine 277. Residues 290-332 form a zinc ribbon region; sequence GALLPCKECSGQLVFKSDAYYCTGDVTAWTKCMVKTQTPSRKE. The Zn(2+) site is built by cysteine 295, cysteine 298, cysteine 311, and cysteine 321. The tract at residues 357–383 is disordered; sequence FPPETSAPAPPHLPPSVTSAPTAVNSS. The segment covering 372-383 has biased composition (polar residues); the sequence is SVTSAPTAVNSS. The segment at 373 to 523 is automodification domain; the sequence is VTSAPTAVNS…GVNKSEKRMK (151 aa). Positions 385 to 476 constitute a BRCT domain; it reads PADKPLSNMK…KSLQELLSAH (92 aa). Aspartate 387 is modified (polyADP-ribosyl aspartic acid). PolyADP-ribosyl glutamic acid is present on residues glutamate 407, glutamate 413, glutamate 435, glutamate 437, glutamate 444, glutamate 445, and glutamate 456. Residue lysine 467 forms a Glycyl lysine isopeptide (Lys-Gly) (interchain with G-Cter in SUMO2) linkage. PolyADP-ribosyl glutamic acid occurs at positions 471 and 484. A Glycyl lysine isopeptide (Lys-Gly) (interchain with G-Cter in SUMO1); alternate cross-link involves residue lysine 486. Lysine 486 is covalently cross-linked (Glycyl lysine isopeptide (Lys-Gly) (interchain with G-Cter in SUMO2); alternate). Glutamate 488 and glutamate 491 each carry polyADP-ribosyl glutamic acid. The segment at 495 to 516 is disordered; it reads PKGKSAAPSKKSKGLYKEEGVN. 3 positions are modified to ADP-ribosylserine: serine 499, serine 503, and serine 506. Residue lysine 511 forms a Glycyl lysine isopeptide (Lys-Gly) (interchain with G-Cter in SUMO2) linkage. Glutamate 512 and glutamate 513 each carry polyADP-ribosyl glutamic acid. ADP-ribosylserine is present on serine 518. PolyADP-ribosyl glutamic acid is present on glutamate 519. Lysine 520 is modified (N6-(ADP-ribosyl)lysine). Lysine 527 is covalently cross-linked (Glycyl lysine isopeptide (Lys-Gly) (interchain with G-Cter in SUMO2)). One can recognise a WGR domain in the interval 541-637; sequence SAHVLEKGGK…KNFTKYPKKF (97 aa). A Phosphothreonine modification is found at threonine 593. N6-acetyllysine occurs at positions 599 and 620. The PARP alpha-helical domain maps to 661-778; that stretch reads KSKLPKAVQE…DIEVAYSLLR (118 aa). A Glycyl lysine isopeptide (Lys-Gly) (interchain with G-Cter in SUMO1); alternate cross-link involves residue lysine 747. Lysine 747 is covalently cross-linked (Glycyl lysine isopeptide (Lys-Gly) (interchain with G-Cter in SUMO2); alternate). 2 positions are modified to phosphoserine: serine 781 and serine 785. In terms of domain architecture, PARP catalytic spans 787-1013; sequence DPIDVNYEKL…LKFNFKTSLW (227 aa). Residues 861–863, glycine 870, arginine 877, and serine 903 contribute to the NAD(+) site; that span reads HGS. Glutamate 987 (for poly [ADP-ribose] polymerase activity) is an active-site residue.

Belongs to the ARTD/PARP family. In terms of assembly, homodimer; PARP-type zinc-fingers from separate PARP1 molecules form a dimer module that specifically recognizes DNA strand breaks. Heterodimer; heterodimerizes with PARP2. Interacts (via the PARP catalytic domain) with HPF1. Interacts with NMNAT1. Interacts with nucleosomes; with a preference for nucleosomes containing H2A.X. Interacts with APTX. Component of a base excision repair (BER) complex, containing at least XRCC1, PARP1, PARP2, POLB and LRIG3. Interacts with SRY. The SWAP complex consists of NPM1, NCL, PARP1 and SWAP70. Interacts with TIAM2. Interacts with PARP3; leading to activate PARP1 in absence of DNA. Interacts (when poly-ADP-ribosylated) with CHD1L (via macro domain). Interacts with the DNA polymerase alpha catalytic subunit POLA1; this interaction functions as part of the control of replication fork progression. Interacts with EEF1A1 and TXK. Interacts with RNF4. Interacts with RNF146. Interacts with ZNF423. Interacts with APLF. Interacts with SNAI1 (via zinc fingers); the interaction requires SNAI1 to be poly-ADP-ribosylated and non-phosphorylated (active) by GSK3B. Interacts (when poly-ADP-ribosylated) with PARP9. Interacts with NR4A3; activates PARP1 by improving acetylation of PARP1 and suppressing the interaction between PARP1 and SIRT1. Interacts (via catalytic domain) with PUM3; the interaction inhibits the poly-ADP-ribosylation activity of PARP1 and the degradation of PARP1 by CASP3 following genotoxic stress. Interacts with ZNF365. Interacts with RRP1B. Interacts with TIMELESS; the interaction is direct. Interacts with CGAS; leading to impede the formation of the PARP1-TIMELESS complex. Interacts with KHDC3L, the interaction is increased following the formation of DNA double-strand breaks. Interacts (when auto-poly-ADP-ribosylated) with XRCC1; leading to inhibit PARP1 ADP-ribosyltransferase activity. Interacts with SPINDOC; promoting PARP1 ADP-ribosyltransferase activity. Interacts with BANF1; leading to inhibit PARP1 ADP-ribosyltransferase activity in response to oxidative DNA damage. Interacts (when sumoylated and ubiquitinated) with VCP/p97; leading to its extraction from chromatin. Interacts with YARS1; promoting PARP1 ADP-ribosyltransferase activity. Interacts with PACMP micropeptide; Interacts with PACMP micropeptide; interaction. Interacts (when poly-ADP-ribosylated) with isoform 1 of MACROH2A1; MACROH2A1 specifically binds to poly-ADP-ribose chains and inhibits PARP1 activity, limiting the consumption of nuclear NAD(+). Interacts with CARM1; promoting recruitment to replication forks. Interacts with RECQL. Interacts with ZNF32; the interaction reshapes ZNF432 interacting proteins. Interacts with TPRN; TPRN interacts with a number of DNA damage response proteins, is recruited to sites of DNA damage and may play a role in DNA damage repair. Interacts (when auto-poly-ADP-ribosylated) with AIFM1. In terms of processing, poly-ADP-ribosylated on serine, glutamate and aspartate residues by autocatalysis. Auto-ADP-ribosylation on serine takes place following interaction with HPF1. Auto poly-ADP-ribosylation on serine residues promotes its dissociation from chromatin. Poly-ADP-ribosylated by PARP2; poly-ADP-ribosylation mediates the recruitment of CHD1L to DNA damage sites. Mono-ADP-ribosylated at Lys-520 by SIRT6 in response to oxidative stress, promoting recruitment to double-strand breaks (DSBs) sites. Post-translationally, S-nitrosylated, leading to inhibit transcription regulation activity. Phosphorylated at Thr-593 by PRKDC in response to DNA damage following virus infection, promoting its translocation to the cytosol. Phosphorylated by TXK. In terms of processing, proteolytically cleaved by caspase-3 (CASP3) and caspase-7 (CASP7) in response to apoptosis to generate the Poly [ADP-ribose] polymerase 1, processed N-terminus and Poly [ADP-ribose] polymerase 1, processed C-terminus forms. Post-translationally, sumoylated with SUMO1 or SUMO2 by PIAS4 following prolonged residence (trapping) to chromatin. Sumoylation promotes ubiquitination by RNF4 and removal from chromatin by VCP/p97. Ubiquitinated by RNF4 following sumoylation by PIAS4 in response to prolonged residence (trapping) to chromatin. Ubiquitination promotes removal from chromatin by VCP/p97.

Its subcellular location is the chromosome. It localises to the nucleus. The protein localises to the nucleolus. The protein resides in the cytoplasm. It is found in the cytosol. The catalysed reaction is NAD(+) + (ADP-D-ribosyl)n-acceptor = nicotinamide + (ADP-D-ribosyl)n+1-acceptor + H(+).. It carries out the reaction L-seryl-[protein] + NAD(+) = O-(ADP-D-ribosyl)-L-seryl-[protein] + nicotinamide + H(+). It catalyses the reaction L-aspartyl-[protein] + NAD(+) = 4-O-(ADP-D-ribosyl)-L-aspartyl-[protein] + nicotinamide. The enzyme catalyses L-glutamyl-[protein] + NAD(+) = 5-O-(ADP-D-ribosyl)-L-glutamyl-[protein] + nicotinamide. The catalysed reaction is L-tyrosyl-[protein] + NAD(+) = O-(ADP-D-ribosyl)-L-tyrosyl-[protein] + nicotinamide + H(+). It carries out the reaction L-histidyl-[protein] + NAD(+) = N(tele)-(ADP-D-ribosyl)-L-histidyl-[protein] + nicotinamide + H(+). Its activity is regulated as follows. ADP-ribosyltransferase activity is regulated via an allosteric activation mechanism. In absence of activation signal, PARP1 is autoinhibited by the PARP alpha-helical domain (also named HD region), which prevents effective NAD(+)-binding. Activity is highly stimulated by signals, such as DNA strand breaks. Binding to damaged DNA unfolds the PARP alpha-helical domain, relieving autoinhibition. Poly-ADP-ribosyltransferase activity is tightly regulated and PARP1 is removed from damaged chromatin following initial poly-ADP-ribosylation of chromatin to avoid prolonged residence (trapping) that has cytotoxic consequences. A number of factors (VCP/p97) or post-translational modifications (auto-poly-ADP-ribosylation or ubiquitination) promote PARP1 removal from chromatin. Poly-ADP-ribosyltransferase that mediates poly-ADP-ribosylation of proteins and plays a key role in DNA repair. Mediates glutamate, aspartate, serine, histidine or tyrosine ADP-ribosylation of proteins: the ADP-D-ribosyl group of NAD(+) is transferred to the acceptor carboxyl group of target residues and further ADP-ribosyl groups are transferred to the 2'-position of the terminal adenosine moiety, building up a polymer with an average chain length of 20-30 units. Serine ADP-ribosylation of proteins constitutes the primary form of ADP-ribosylation of proteins in response to DNA damage. Specificity for the different amino acids is conferred by interacting factors, such as HPF1 and NMNAT1. Following interaction with HPF1, catalyzes serine ADP-ribosylation of target proteins; HPF1 confers serine specificity by completing the PARP1 active site. Also catalyzes tyrosine ADP-ribosylation of target proteins following interaction with HPF1. Following interaction with NMNAT1, catalyzes glutamate and aspartate ADP-ribosylation of target proteins; NMNAT1 confers glutamate and aspartate specificity. PARP1 initiates the repair of DNA breaks: recognizes and binds DNA breaks within chromatin and recruits HPF1, licensing serine ADP-ribosylation of target proteins, such as histones (H2BS6ADPr and H3S10ADPr), thereby promoting decompaction of chromatin and the recruitment of repair factors leading to the reparation of DNA strand breaks. HPF1 initiates serine ADP-ribosylation but restricts the polymerase activity of PARP1 in order to limit the length of poly-ADP-ribose chains. In addition to base excision repair (BER) pathway, also involved in double-strand breaks (DSBs) repair: together with TIMELESS, accumulates at DNA damage sites and promotes homologous recombination repair by mediating poly-ADP-ribosylation. Mediates the poly-ADP-ribosylation of a number of proteins, including itself, APLF, CHFR and NFAT5. In addition to proteins, also able to ADP-ribosylate DNA: catalyzes ADP-ribosylation of DNA strand break termini containing terminal phosphates and a 2'-OH group in single- and double-stranded DNA, respectively. Required for PARP9 and DTX3L recruitment to DNA damage sites. PARP1-dependent PARP9-DTX3L-mediated ubiquitination promotes the rapid and specific recruitment of 53BP1/TP53BP1, UIMC1/RAP80, and BRCA1 to DNA damage sites. PARP1-mediated DNA repair in neurons plays a role in sleep: senses DNA damage in neurons and promotes sleep, facilitating efficient DNA repair. In addition to DNA repair, also involved in other processes, such as transcription regulation, programmed cell death, membrane repair, adipogenesis and innate immunity. Acts as a repressor of transcription: binds to nucleosomes and modulates chromatin structure in a manner similar to histone H1, thereby altering RNA polymerase II. Acts both as a positive and negative regulator of transcription elongation, depending on the context. Acts as a positive regulator of transcription elongation by mediating poly-ADP-ribosylation of NELFE, preventing RNA-binding activity of NELFE and relieving transcription pausing. Acts as a negative regulator of transcription elongation in response to DNA damage by catalyzing poly-ADP-ribosylation of CCNT1, disrupting the phase separation activity of CCNT1 and subsequent activation of CDK9. Involved in replication fork progression following interaction with CARM1: mediates poly-ADP-ribosylation at replication forks, slowing fork progression. Poly-ADP-ribose chains generated by PARP1 also play a role in poly-ADP-ribose-dependent cell death, a process named parthanatos. Also acts as a negative regulator of the cGAS-STING pathway. Acts by mediating poly-ADP-ribosylation of CGAS: PARP1 translocates into the cytosol following phosphorylation by PRKDC and catalyzes poly-ADP-ribosylation and inactivation of CGAS. Acts as a negative regulator of adipogenesis: catalyzes poly-ADP-ribosylation of histone H2B on 'Glu-35' (H2BE35ADPr) following interaction with NMNAT1, inhibiting phosphorylation of H2B at 'Ser-36' (H2BS36ph), thereby blocking expression of pro-adipogenetic genes. Involved in the synthesis of ATP in the nucleus, together with NMNAT1, PARG and NUDT5. Nuclear ATP generation is required for extensive chromatin remodeling events that are energy-consuming. Functionally, promotes AIFM1-mediated apoptosis. This form, which translocates into the cytoplasm following cleavage by caspase-3 (CASP3) and caspase-7 (CASP7) in response to apoptosis, is auto-poly-ADP-ribosylated and serves as a poly-ADP-ribose carrier to induce AIFM1-mediated apoptosis. In terms of biological role, this cleavage form irreversibly binds to DNA breaks and interferes with DNA repair, promoting DNA damage-induced apoptosis. This is Poly [ADP-ribose] polymerase 1 (PARP1) from Cricetulus griseus (Chinese hamster).